The following is a 123-amino-acid chain: Small ribosomal subunit protein uS12 (123 aa).

A disordered region spans residues 1–30 (MPTIQQLIRKPRQPKVQRSKSQHLQSCPQK). Positions 9-21 (RKPRQPKVQRSKS) are enriched in basic residues. A 3-methylthioaspartic acid modification is found at Asp-89.

The protein belongs to the universal ribosomal protein uS12 family. Part of the 30S ribosomal subunit. Contacts proteins S8 and S17. May interact with IF1 in the 30S initiation complex.

With S4 and S5 plays an important role in translational accuracy. Its function is as follows. Interacts with and stabilizes bases of the 16S rRNA that are involved in tRNA selection in the A site and with the mRNA backbone. Located at the interface of the 30S and 50S subunits, it traverses the body of the 30S subunit contacting proteins on the other side and probably holding the rRNA structure together. The combined cluster of proteins S8, S12 and S17 appears to hold together the shoulder and platform of the 30S subunit. The polypeptide is Small ribosomal subunit protein uS12 (Paracoccus denitrificans (strain Pd 1222)).